A 210-amino-acid polypeptide reads, in one-letter code: Cytochrome c4 (210 aa).

The signal sequence occupies residues 1–20; the sequence is MNKVLVSLLLTLGITGMAHA. Heme c-binding residues include cysteine 34, cysteine 37, histidine 38, methionine 86, cysteine 139, cysteine 142, histidine 143, and methionine 187.

Post-translationally, binds 2 heme c groups covalently per subunit.

The protein resides in the periplasm. In terms of biological role, diheme, high potential cytochrome c believed to be an intermediate electron donor to terminal oxidation systems. The protein is Cytochrome c4 (cc4) of Stutzerimonas stutzeri (Pseudomonas stutzeri).